A 183-amino-acid chain; its full sequence is Mitochondrial inner membrane protease subunit 2 (183 aa).

A helical transmembrane segment spans residues 13–35 (AFVSGFFVAVPVTVTVLDRLAYV). Catalysis depends on residues Ser-42 and Lys-90. A disordered region spans residues 161 to 183 (SVPPDRRPLLNWDRAAEDKYDDD). Basic and acidic residues predominate over residues 164–183 (PDRRPLLNWDRAAEDKYDDD).

It belongs to the peptidase S26 family. IMP2 subfamily. As to quaternary structure, heterodimer of 2 subunits, IMMPL1 and IMMPL2.

The protein localises to the mitochondrion inner membrane. Its function is as follows. Catalyzes the removal of transit peptides required for the targeting of proteins from the mitochondrial matrix, across the inner membrane, into the inter-membrane space. This chain is Mitochondrial inner membrane protease subunit 2 (immp2l), found in Danio rerio (Zebrafish).